Here is a 94-residue protein sequence, read N- to C-terminus: PqqA binding protein (94 aa).

Belongs to the PqqD family. Monomer. Interacts with PqqE.

Its pathway is cofactor biosynthesis; pyrroloquinoline quinone biosynthesis. In terms of biological role, functions as a PqqA binding protein and presents PqqA to PqqE, in the pyrroloquinoline quinone (PQQ) biosynthetic pathway. In Acinetobacter baumannii (strain AB307-0294), this protein is PqqA binding protein.